The following is a 434-amino-acid chain: Glycoprotein U20 (434 aa).

The signal sequence occupies residues 1 to 15 (MITVFVACLFQCVSS). A helical transmembrane segment spans residues 322–342 (LLWIFIVIPIAAGCMFLYILT).

The protein localises to the host endoplasmic reticulum membrane. It is found in the host lysosome membrane. Plays a role in the down-regulation of the host stress-induced NKG2D ligand UBPL1, which enables immune cells expressing the NKG2D receptor to recognize and annihilate infected cells prior to viral spread. The sequence is that of Glycoprotein U20 (U20) from Human herpesvirus 6B (strain Z29) (HHV-6 variant B).